A 274-amino-acid polypeptide reads, in one-letter code: 4-diphosphocytidyl-2-C-methyl-D-erythritol kinase (274 aa).

The active site involves lysine 8. 94 to 104 (PSGAGLGGGSA) is an ATP binding site. Aspartate 136 is an active-site residue.

The protein belongs to the GHMP kinase family. IspE subfamily.

The enzyme catalyses 4-CDP-2-C-methyl-D-erythritol + ATP = 4-CDP-2-C-methyl-D-erythritol 2-phosphate + ADP + H(+). The protein operates within isoprenoid biosynthesis; isopentenyl diphosphate biosynthesis via DXP pathway; isopentenyl diphosphate from 1-deoxy-D-xylulose 5-phosphate: step 3/6. In terms of biological role, catalyzes the phosphorylation of the position 2 hydroxy group of 4-diphosphocytidyl-2C-methyl-D-erythritol. This Bacteroides fragilis (strain ATCC 25285 / DSM 2151 / CCUG 4856 / JCM 11019 / LMG 10263 / NCTC 9343 / Onslow / VPI 2553 / EN-2) protein is 4-diphosphocytidyl-2-C-methyl-D-erythritol kinase.